The chain runs to 353 residues: UDP-N-acetylglucosamine--N-acetylmuramyl-(pentapeptide) pyrophosphoryl-undecaprenol N-acetylglucosamine transferase (353 aa).

UDP-N-acetyl-alpha-D-glucosamine-binding positions include 10–12, N124, S183, and Q283; that span reads TGG.

It belongs to the glycosyltransferase 28 family. MurG subfamily.

The protein localises to the cell inner membrane. The catalysed reaction is di-trans,octa-cis-undecaprenyl diphospho-N-acetyl-alpha-D-muramoyl-L-alanyl-D-glutamyl-meso-2,6-diaminopimeloyl-D-alanyl-D-alanine + UDP-N-acetyl-alpha-D-glucosamine = di-trans,octa-cis-undecaprenyl diphospho-[N-acetyl-alpha-D-glucosaminyl-(1-&gt;4)]-N-acetyl-alpha-D-muramoyl-L-alanyl-D-glutamyl-meso-2,6-diaminopimeloyl-D-alanyl-D-alanine + UDP + H(+). It participates in cell wall biogenesis; peptidoglycan biosynthesis. Cell wall formation. Catalyzes the transfer of a GlcNAc subunit on undecaprenyl-pyrophosphoryl-MurNAc-pentapeptide (lipid intermediate I) to form undecaprenyl-pyrophosphoryl-MurNAc-(pentapeptide)GlcNAc (lipid intermediate II). The chain is UDP-N-acetylglucosamine--N-acetylmuramyl-(pentapeptide) pyrophosphoryl-undecaprenol N-acetylglucosamine transferase from Helicobacter pylori (strain P12).